Consider the following 473-residue polypeptide: ATP synthase subunit beta (473 aa).

Residue 158-165 (GGAGVGKT) participates in ATP binding.

This sequence belongs to the ATPase alpha/beta chains family. F-type ATPases have 2 components, CF(1) - the catalytic core - and CF(0) - the membrane proton channel. CF(1) has five subunits: alpha(3), beta(3), gamma(1), delta(1), epsilon(1). CF(0) has three main subunits: a(1), b(2) and c(9-12). The alpha and beta chains form an alternating ring which encloses part of the gamma chain. CF(1) is attached to CF(0) by a central stalk formed by the gamma and epsilon chains, while a peripheral stalk is formed by the delta and b chains.

The protein localises to the cell membrane. The catalysed reaction is ATP + H2O + 4 H(+)(in) = ADP + phosphate + 5 H(+)(out). Produces ATP from ADP in the presence of a proton gradient across the membrane. The catalytic sites are hosted primarily by the beta subunits. The chain is ATP synthase subunit beta from Bacillus pumilus (strain SAFR-032).